The primary structure comprises 106 residues: Large ribosomal subunit protein uL24 (106 aa).

Belongs to the universal ribosomal protein uL24 family. Part of the 50S ribosomal subunit.

Its function is as follows. One of two assembly initiator proteins, it binds directly to the 5'-end of the 23S rRNA, where it nucleates assembly of the 50S subunit. Functionally, one of the proteins that surrounds the polypeptide exit tunnel on the outside of the subunit. The protein is Large ribosomal subunit protein uL24 of Bordetella petrii (strain ATCC BAA-461 / DSM 12804 / CCUG 43448).